A 273-amino-acid polypeptide reads, in one-letter code: Progestin and adipoQ receptor family member 4 (273 aa).

5 consecutive transmembrane segments (helical) span residues I52–W72, G79–Y99, L115–I135, L185–C205, and L245–A265.

This sequence belongs to the ADIPOR family. Interacts with CERS2 and CERS5; the interaction regulates CERS2 and CERS5 stabilities and activities and is inhibited in presence of ceramides. In terms of tissue distribution, expressed in adipose tissue.

It is found in the golgi apparatus membrane. Its function is as follows. Plays a role in maintaining adipose tissue function through the regulation of ceramide levels. Mediates the stability of ceramide synthetases, CERS2 and CERS5, and their activities. The sequence is that of Progestin and adipoQ receptor family member 4 from Mus musculus (Mouse).